A 234-amino-acid polypeptide reads, in one-letter code: LexA repressor (234 aa).

The segment at residues 26-46 (FDEMKEALDLASKSGIHRLIT) is a DNA-binding region (H-T-H motif). Residues 73-107 (ATAAAPPKGRGAFRPQVFEGGGAPPPAASPAAAAN) form a disordered region. Residues Ser-155 and Lys-192 each act as for autocatalytic cleavage activity in the active site.

This sequence belongs to the peptidase S24 family. Homodimer.

It catalyses the reaction Hydrolysis of Ala-|-Gly bond in repressor LexA.. Its function is as follows. Represses a number of genes involved in the response to DNA damage (SOS response), including recA and lexA. In the presence of single-stranded DNA, RecA interacts with LexA causing an autocatalytic cleavage which disrupts the DNA-binding part of LexA, leading to derepression of the SOS regulon and eventually DNA repair. This Caulobacter vibrioides (strain ATCC 19089 / CIP 103742 / CB 15) (Caulobacter crescentus) protein is LexA repressor.